Consider the following 560-residue polypeptide: Long-chain-fatty-acid--CoA ligase (560 aa).

This sequence belongs to the ATP-dependent AMP-binding enzyme family.

It carries out the reaction a long-chain fatty acid + ATP + CoA = a long-chain fatty acyl-CoA + AMP + diphosphate. The sequence is that of Long-chain-fatty-acid--CoA ligase (lcfA) from Bacillus subtilis (strain 168).